Reading from the N-terminus, the 239-residue chain is Exosome complex exonuclease RRP46 homolog (239 aa).

Met-1 bears the N-acetylmethionine mark.

Belongs to the RNase PH family. As to quaternary structure, probable component of the RNA exosome complex.

Its subcellular location is the nucleus. The protein resides in the nucleolus. Its function is as follows. Probable component of the exosome 3'-&gt;5' exoribonuclease complex, a complex that degrades inherently unstable mRNAs containing AU-rich elements (AREs) within their 3'-untranslated regions. The protein is Exosome complex exonuclease RRP46 homolog of Arabidopsis thaliana (Mouse-ear cress).